The primary structure comprises 495 residues: Geraniol 8-hydroxylase (495 aa).

A helical transmembrane segment spans residues 5–25 (FLTIAIGFLFTITLYQALNFF). Residue Cys438 participates in heme binding.

The protein belongs to the cytochrome P450 family. Heme serves as cofactor. As to expression, expressed in leaves, stems and roots.

It is found in the endoplasmic reticulum membrane. It carries out the reaction (2E)-geraniol + reduced [NADPH--hemoprotein reductase] + O2 = (6E)-8-hydroxygeraniol + oxidized [NADPH--hemoprotein reductase] + H2O + H(+). In terms of biological role, hydroxylase involved in the biosynthesis of hydroxygeraniol, a precursor of the iridoid monoterpenoid swertiamarin. This chain is Geraniol 8-hydroxylase (CYP76B10), found in Swertia mussotii (Felwort).